A 72-amino-acid polypeptide reads, in one-letter code: UPF0346 protein GTNG_1419 (72 aa).

The protein belongs to the UPF0346 family.

This is UPF0346 protein GTNG_1419 from Geobacillus thermodenitrificans (strain NG80-2).